Reading from the N-terminus, the 632-residue chain is Chaperone protein HtpG (632 aa).

The tract at residues 1-339 (MAHETMSFQA…SADLPLNVSR (339 aa)) is a; substrate-binding. The b stretch occupies residues 340-559 (EILQESRDVK…DNDMSGYLQR (220 aa)). Residues 560-632 (MLKAAGQNAP…TNALLLSRAA (73 aa)) are c.

This sequence belongs to the heat shock protein 90 family. As to quaternary structure, homodimer.

It localises to the cytoplasm. Its function is as follows. Molecular chaperone. Has ATPase activity. This Burkholderia lata (strain ATCC 17760 / DSM 23089 / LMG 22485 / NCIMB 9086 / R18194 / 383) protein is Chaperone protein HtpG.